The chain runs to 261 residues: Indole-3-glycerol phosphate synthase (261 aa).

This sequence belongs to the TrpC family.

The enzyme catalyses 1-(2-carboxyphenylamino)-1-deoxy-D-ribulose 5-phosphate + H(+) = (1S,2R)-1-C-(indol-3-yl)glycerol 3-phosphate + CO2 + H2O. It functions in the pathway amino-acid biosynthesis; L-tryptophan biosynthesis; L-tryptophan from chorismate: step 4/5. In Burkholderia pseudomallei (strain 1106a), this protein is Indole-3-glycerol phosphate synthase.